We begin with the raw amino-acid sequence, 353 residues long: Methylthioribose-1-phosphate isomerase (353 aa).

Residues 51–53, R94, and Q203 contribute to the substrate site; that span reads RGA. D244 serves as the catalytic Proton donor. 254 to 255 contacts substrate; sequence NK.

It belongs to the eIF-2B alpha/beta/delta subunits family. MtnA subfamily.

It catalyses the reaction 5-(methylsulfanyl)-alpha-D-ribose 1-phosphate = 5-(methylsulfanyl)-D-ribulose 1-phosphate. It participates in amino-acid biosynthesis; L-methionine biosynthesis via salvage pathway; L-methionine from S-methyl-5-thio-alpha-D-ribose 1-phosphate: step 1/6. In terms of biological role, catalyzes the interconversion of methylthioribose-1-phosphate (MTR-1-P) into methylthioribulose-1-phosphate (MTRu-1-P). The protein is Methylthioribose-1-phosphate isomerase of Nostoc punctiforme (strain ATCC 29133 / PCC 73102).